The primary structure comprises 1004 residues: Glycine dehydrogenase (decarboxylating), mitochondrial (1004 aa).

At lysine 738 the chain carries N6-(pyridoxal phosphate)lysine.

This sequence belongs to the GcvP family. In terms of assembly, homodimer. Interacts with GCSH. The glycine cleavage system is composed of four proteins: P (GLDC), T (GCST), L (DLD) and H (GCSH). The cofactor is pyridoxal 5'-phosphate. In terms of tissue distribution, liver (at protein level).

It localises to the mitochondrion. The catalysed reaction is N(6)-[(R)-lipoyl]-L-lysyl-[glycine-cleavage complex H protein] + glycine + H(+) = N(6)-[(R)-S(8)-aminomethyldihydrolipoyl]-L-lysyl-[glycine-cleavage complex H protein] + CO2. With respect to regulation, stimulated by lipoic acid. Inhibited in presence of methylamine. Functionally, the glycine cleavage system catalyzes the degradation of glycine. The P protein (GLDC) binds the alpha-amino group of glycine through its pyridoxal phosphate cofactor; CO(2) is released and the remaining methylamine moiety is then transferred to the lipoamide cofactor of the H protein (GCSH). The protein is Glycine dehydrogenase (decarboxylating), mitochondrial of Gallus gallus (Chicken).